The chain runs to 516 residues: 2-isopropylmalate synthase (516 aa).

The region spanning 10 to 271 (IRIFDTTLRD…TTGIDTRELA (262 aa)) is the Pyruvate carboxyltransferase domain. Positions 19, 205, 207, and 241 each coordinate Mn(2+). Residues 396-516 (ELVSFRVEAG…REKASNRETP (121 aa)) are regulatory domain.

This sequence belongs to the alpha-IPM synthase/homocitrate synthase family. LeuA type 1 subfamily. As to quaternary structure, homodimer. Mn(2+) is required as a cofactor.

The protein resides in the cytoplasm. It carries out the reaction 3-methyl-2-oxobutanoate + acetyl-CoA + H2O = (2S)-2-isopropylmalate + CoA + H(+). Its pathway is amino-acid biosynthesis; L-leucine biosynthesis; L-leucine from 3-methyl-2-oxobutanoate: step 1/4. Its function is as follows. Catalyzes the condensation of the acetyl group of acetyl-CoA with 3-methyl-2-oxobutanoate (2-ketoisovalerate) to form 3-carboxy-3-hydroxy-4-methylpentanoate (2-isopropylmalate). The protein is 2-isopropylmalate synthase of Acidimicrobium ferrooxidans (strain DSM 10331 / JCM 15462 / NBRC 103882 / ICP).